A 105-amino-acid chain; its full sequence is Nucleoid-associated protein MW0434 (105 aa).

Positions 1-33 (MRGGGNMQQMMKQMQKMQKKMAQEQEKLKEERI) are disordered. Low complexity predominate over residues 7–16 (MQQMMKQMQK). Over residues 21–33 (MAQEQEKLKEERI) the composition is skewed to basic and acidic residues.

This sequence belongs to the YbaB/EbfC family. In terms of assembly, homodimer.

It localises to the cytoplasm. Its subcellular location is the nucleoid. Its function is as follows. Binds to DNA and alters its conformation. May be involved in regulation of gene expression, nucleoid organization and DNA protection. This chain is Nucleoid-associated protein MW0434, found in Staphylococcus aureus (strain MW2).